The sequence spans 782 residues: Beta-mannosyltransferase 9 (782 aa).

Topologically, residues 1-26 (MEKLIQSTISLFISLSLKISTKSYKS) are cytoplasmic. A helical transmembrane segment spans residues 27–47 (IISILFIISLLSIILTTTITV). Residues 48-782 (YHDPERIITT…GKDKGKDKSN (735 aa)) lie on the Extracellular side of the membrane. The tract at residues 66 to 96 (KSVFTASSPKQQDKLQQEIDQHQSDNSHEQQ) is disordered. A compositionally biased stretch (basic and acidic residues) spans 76-96 (QQDKLQQEIDQHQSDNSHEQQ). Asn445, Asn648, and Asn699 each carry an N-linked (GlcNAc...) asparagine glycan.

This sequence belongs to the BMT family.

It localises to the membrane. Its function is as follows. Beta-mannosyltransferase involved in cell wall biosynthesis through beta-1,2-mannosylation of cell wall phosphopeptidomannan. This chain is Beta-mannosyltransferase 9 (BMT9), found in Candida albicans (strain SC5314 / ATCC MYA-2876) (Yeast).